Consider the following 589-residue polypeptide: Ectoderm-neural cortex protein 1 (589 aa).

Residues 46-114 (TDVLLHAGNR…AYSSRVIINE (69 aa)) enclose the BTB domain. Kelch repeat units lie at residues 296 to 340 (ALFL…AIGC), 341 to 388 (KVYI…ELKH), 389 to 444 (CLYV…SAKL), 446 to 492 (LFAF…VLGN), 494 to 538 (IFIM…ASGN), and 539 to 585 (KLYV…STWK).

In terms of assembly, binds to RB1. Hypophosphorylated RB1 associates with ENC1 during neuronal differentiation, while hyperphosphorylated RB1 associates with ENC1 in undifferentiating cells. Part of a complex that contains CUL3, RBX1 and ENC1. Interacts indirectly with KEAP1. Ubiquitinated by E3 ubiquitin ligase complex formed by CUL3 and RBX1 and probably targeted for proteasome-independent degradation. Quinone-induced oxidative stress increases its ubiquitination. Detected in fetal brain tissue, moderate expression in fetal heart, lung and kidney. Highly expressed in adult brain, particularly high in the hippocampus and amygdala, and spinal cord. Detectable in adult pancreas. May be down-regulated in neuroblastoma tumors.

Its subcellular location is the nucleus matrix. The protein resides in the cytoplasm. It is found in the cytoskeleton. Actin-binding protein involved in the regulation of neuronal process formation and in differentiation of neural crest cells. Down-regulates transcription factor NF2L2/NRF2 by decreasing the rate of protein synthesis and not via a ubiquitin-mediated proteasomal degradation mechanism. The chain is Ectoderm-neural cortex protein 1 (ENC1) from Homo sapiens (Human).